The primary structure comprises 216 residues: MHAPHTATALRRTKKLPPLRVGIGGPVGSGKTTLLEMLCKGMRERYDLVAITNDIYTKEDQRLLTIAGALPEERIMGVETGGCPHTAIREDASINLEAVERMLARFPDADIVFIESGGDNLAATFSPELSDLTIYVIDVAGGEKIPRKGGPGITKSDLLVINKTDLAPLVGANLDVMASDTKKMRGERPYVMCNLKALDGVADVIAFIEKKGLLTV.

Residue 25 to 32 (GPVGSGKT) participates in GTP binding.

It belongs to the SIMIBI class G3E GTPase family. UreG subfamily. In terms of assembly, homodimer. UreD, UreF and UreG form a complex that acts as a GTP-hydrolysis-dependent molecular chaperone, activating the urease apoprotein by helping to assemble the nickel containing metallocenter of UreC. The UreE protein probably delivers the nickel.

The protein resides in the cytoplasm. Facilitates the functional incorporation of the urease nickel metallocenter. This process requires GTP hydrolysis, probably effectuated by UreG. The chain is Urease accessory protein UreG from Burkholderia thailandensis (strain ATCC 700388 / DSM 13276 / CCUG 48851 / CIP 106301 / E264).